We begin with the raw amino-acid sequence, 304 residues long: MYVLSVEKPTLRNKFAAGIGVVLVCVVASFIPTPVFALDTTKLIQAVQSEESALHARVGMTVFDSNTGTTWNYRGDERFPLNSTHKTFSCAALLAKVDGKSLSLGQSVSISKEMLVTYSPITEKSLSPETVTFGKICQAAVSYSDNTAANVVFDAIGGATGFNAYMRSIGDEETQLDRKEPELNEGTPGDVRDTTTPNAMVNSLRKILLGDALSASSRSQLTQWMLDDQVAGALLRASLPSDWKIADKTGAGGYGSRSIVAVIWPPSKQPLVVGIYITQTKASMQASNQAIARIGVVLKDTVAP.

The N-terminal stretch at 1–37 is a signal peptide; sequence MYVLSVEKPTLRNKFAAGIGVVLVCVVASFIPTPVFA. Ser-83 serves as the catalytic Acyl-ester intermediate. Cys-90 and Cys-137 are disulfide-bonded. Residues 173–195 are disordered; the sequence is ETQLDRKEPELNEGTPGDVRDTT. 248–250 is a substrate binding site; sequence KTG.

It belongs to the class-A beta-lactamase family.

The catalysed reaction is a beta-lactam + H2O = a substituted beta-amino acid. Its function is as follows. Hydrolyzes carbenicillin. Methicillin and oxacillin are weakly hydrolyzed. This Aeromonas hydrophila protein is Beta-lactamase AER-1 (aer1).